The chain runs to 243 residues: uncharacterized protein (243 aa).

Residues 1-16 form the signal peptide; that stretch reads MKLLALVALCAVGVAS. N-linked (GlcNAc...) asparagine glycosylation occurs at Asn55. Disordered regions lie at residues 95–126 and 208–235; these read SQGR…EKPS and NQQQ…KPTV. Composition is skewed to low complexity over residues 99-112 and 209-229; these read NQQQ…SQGG and QQQQ…STTL. The cysteines at positions 141 and 239 are disulfide-linked.

This sequence belongs to the protease inhibitor I33 family.

It localises to the secreted. This is an uncharacterized protein from Caenorhabditis elegans.